The chain runs to 328 residues: tRNA dimethylallyltransferase (328 aa).

Residue 10–17 (GPTASGKT) participates in ATP binding. 12–17 (TASGKT) contacts substrate.

It belongs to the IPP transferase family. In terms of assembly, monomer. The cofactor is Mg(2+).

It catalyses the reaction adenosine(37) in tRNA + dimethylallyl diphosphate = N(6)-dimethylallyladenosine(37) in tRNA + diphosphate. Functionally, catalyzes the transfer of a dimethylallyl group onto the adenine at position 37 in tRNAs that read codons beginning with uridine, leading to the formation of N6-(dimethylallyl)adenosine (i(6)A). The chain is tRNA dimethylallyltransferase from Bifidobacterium longum subsp. infantis (strain ATCC 15697 / DSM 20088 / JCM 1222 / NCTC 11817 / S12).